We begin with the raw amino-acid sequence, 491 residues long: Monothiol glutaredoxin-S11 (491 aa).

3 consecutive Glutaredoxin domains span residues 151–253 (NKRL…NIPL), 287–389 (KERL…GIVA), and 394–491 (EDRL…TLSE). Lys411 is a binding site for glutathione. Position 419 (Cys419) interacts with [2Fe-2S] cluster. Residues Arg448, Phe460, and 473–474 (CD) each bind glutathione.

It belongs to the glutaredoxin family. CGFS subfamily.

The protein localises to the cytoplasm. In terms of biological role, may only reduce GSH-thiol disulfides, but not protein disulfides. This chain is Monothiol glutaredoxin-S11 (GRXS11), found in Oryza sativa subsp. japonica (Rice).